The following is a 747-amino-acid chain: Histone-lysine N-methyltransferase EZH1 (747 aa).

Residues 186 to 229 (YSDEDEEGHNDTSDGKQDDSKEDLPVTRKRKRHAIEGSKKSSKK) are disordered. Basic and acidic residues predominate over residues 194–211 (HNDTSDGKQDDSKEDLPV). Residue K327 forms a Glycyl lysine isopeptide (Lys-Gly) (interchain with G-Cter in SUMO2) linkage. Residues 375-421 (TSASAVAETKEGDSDRDTGNDWASSSSEANSRCQTPTKQKASPAPPQ) form a disordered region. The segment covering 382 to 393 (ETKEGDSDRDTG) has biased composition (basic and acidic residues). The segment covering 395–414 (DWASSSSEANSRCQTPTKQK) has biased composition (polar residues). One can recognise a CXC domain in the interval 504 to 606 (CRKIQLKKDN…CKVVSCKNCS (103 aa)). In terms of domain architecture, SET spans 613–728 (KHLLLAPSDV…AGEELFFDYR (116 aa)).

It belongs to the class V-like SAM-binding methyltransferase superfamily. Histone-lysine methyltransferase family. EZ subfamily. As to quaternary structure, component of the PRC2/EED-EZH1 complex, which includes EED, EZH1, SUZ12, RBBP4 and AEBP2. The PRC2/EED-EZH1 is less abundant than the PRC2/EED-EZH2 complex, has weak methyltransferase activity and compacts chromatin in the absence of the methyltransferase cofactor S-adenosyl-L-methionine (SAM). Interacts with EZHIP; the interaction blocks EZH1 methyltransferase activity.

It is found in the nucleus. It catalyses the reaction L-lysyl(27)-[histone H3] + 3 S-adenosyl-L-methionine = N(6),N(6),N(6)-trimethyl-L-lysyl(27)-[histone H3] + 3 S-adenosyl-L-homocysteine + 3 H(+). Polycomb group (PcG) protein. Catalytic subunit of the PRC2/EED-EZH1 complex, which methylates 'Lys-27' of histone H3, leading to transcriptional repression of the affected target gene. Able to mono-, di- and trimethylate 'Lys-27' of histone H3 to form H3K27me1, H3K27me2 and H3K27me3, respectively. Required for embryonic stem cell derivation and self-renewal, suggesting that it is involved in safeguarding embryonic stem cell identity. Compared to EZH2-containing complexes, it is less abundant in embryonic stem cells, has weak methyltransferase activity and plays a less critical role in forming H3K27me3, which is required for embryonic stem cell identity and proper differentiation. The polypeptide is Histone-lysine N-methyltransferase EZH1 (EZH1) (Bos taurus (Bovine)).